The chain runs to 109 residues: Small ribosomal subunit protein eS25z (109 aa).

A disordered region spans residues 1–36 (MAPKKDKVPPPSSKPAKSGGGKQKKKKWSKGKQKEK). Residues 22–31 (KQKKKKWSKG) are compositionally biased toward basic residues.

It belongs to the eukaryotic ribosomal protein eS25 family.

The sequence is that of Small ribosomal subunit protein eS25z (RPS25A) from Arabidopsis thaliana (Mouse-ear cress).